The chain runs to 293 residues: Bis(5'-nucleosyl)-tetraphosphatase, symmetrical (293 aa).

Belongs to the Ap4A hydrolase family.

It catalyses the reaction P(1),P(4)-bis(5'-adenosyl) tetraphosphate + H2O = 2 ADP + 2 H(+). In terms of biological role, hydrolyzes diadenosine 5',5'''-P1,P4-tetraphosphate to yield ADP. The chain is Bis(5'-nucleosyl)-tetraphosphatase, symmetrical from Pseudomonas fluorescens (strain Pf0-1).